Consider the following 660-residue polypeptide: 1-deoxy-D-xylulose-5-phosphate synthase (660 aa).

Thiamine diphosphate contacts are provided by residues His-86 and 127-129 (AHS). Asp-164 provides a ligand contact to Mg(2+). Thiamine diphosphate-binding positions include 165–166 (GS), Asn-196, Tyr-306, and Glu-388. Residue Asn-196 participates in Mg(2+) binding.

It belongs to the transketolase family. DXPS subfamily. Homodimer. It depends on Mg(2+) as a cofactor. Thiamine diphosphate serves as cofactor.

It catalyses the reaction D-glyceraldehyde 3-phosphate + pyruvate + H(+) = 1-deoxy-D-xylulose 5-phosphate + CO2. Its pathway is metabolic intermediate biosynthesis; 1-deoxy-D-xylulose 5-phosphate biosynthesis; 1-deoxy-D-xylulose 5-phosphate from D-glyceraldehyde 3-phosphate and pyruvate: step 1/1. Functionally, catalyzes the acyloin condensation reaction between C atoms 2 and 3 of pyruvate and glyceraldehyde 3-phosphate to yield 1-deoxy-D-xylulose-5-phosphate (DXP). The polypeptide is 1-deoxy-D-xylulose-5-phosphate synthase (Gluconobacter oxydans (strain 621H) (Gluconobacter suboxydans)).